The chain runs to 116 residues: MTNKIIQQLEAEQMSKEIPTFAPGDTIVVQVKVKEGERSRLQAFEGVVIAKRNRGLNSAFTVRKISSGVGVERTFQTYSPQIDSLAVKRRGDVRKAKLYYLRDLSGKAARIKEKLS.

This sequence belongs to the bacterial ribosomal protein bL19 family.

Its function is as follows. This protein is located at the 30S-50S ribosomal subunit interface and may play a role in the structure and function of the aminoacyl-tRNA binding site. In Pseudomonas putida (strain W619), this protein is Large ribosomal subunit protein bL19.